We begin with the raw amino-acid sequence, 277 residues long: Carbonyl reductase [NADPH] 1 (277 aa).

Ser2 is subject to N-acetylserine. 2 positions are modified to phosphoserine: Ser2 and Ser30. Residues 10–34, 63–64, and Asn90 each bind NADP(+); these read VTGG…GDVV and DI. Glutathione-binding positions include 95–97 and Gln106; that span reads FKV. Ser140 contacts substrate. Residue 193-194 coordinates glutathione; sequence AY. Residue Tyr194 is the Proton acceptor of the active site. NADP(+) contacts are provided by residues 194–198 and 231–233; these read YGVTK and VRT. Lys239 is modified (N6-1-carboxyethyl lysine).

The protein belongs to the short-chain dehydrogenases/reductases (SDR) family. In terms of assembly, monomer.

The protein localises to the cytoplasm. It catalyses the reaction a secondary alcohol + NADP(+) = a ketone + NADPH + H(+). It carries out the reaction prostaglandin F2alpha + NADP(+) = prostaglandin E2 + NADPH + H(+). The catalysed reaction is prostaglandin E1 + NADP(+) = 15-oxoprostaglandin E1 + NADPH + H(+). The enzyme catalyses menadione + NADPH + H(+) = menadiol + NADP(+). It catalyses the reaction prostaglandin D2 + NADP(+) = 15-oxoprostaglandin D2 + NADPH + H(+). It carries out the reaction prostaglandin E2 + NADP(+) = 15-oxoprostaglandin E2 + NADPH + H(+). The catalysed reaction is prostaglandin F2alpha + NADP(+) = 15-oxoprostaglandin F2alpha + NADPH + H(+). The enzyme catalyses daunorubicin + NADPH + H(+) = 13-dihydrodaunorubicin + NADP(+). It catalyses the reaction S-nitrosoglutathione + NADPH + H(+) = S-(hydroxysulfenamide)glutathione + NADP(+). It carries out the reaction a primary alcohol + NADP(+) = an aldehyde + NADPH + H(+). The catalysed reaction is cortisol + NADPH + H(+) = 20beta-dihydrocortisol + NADP(+). The enzyme catalyses corticosterone + NADPH + H(+) = 20beta-dihydrocorticosterone + NADP(+). Its function is as follows. NADPH-dependent reductase with broad substrate specificity. Catalyzes the reduction of a wide variety of carbonyl compounds including quinones, prostaglandins, menadione, plus various xenobiotics. Catalyzes the reduction of the antitumor anthracyclines doxorubicin and daunorubicin to the cardiotoxic compounds doxorubicinol and daunorubicinol. Can convert prostaglandin E to prostaglandin F2-alpha. Can bind glutathione, which explains its higher affinity for glutathione-conjugated substrates. Catalyzes the reduction of S-nitrosoglutathione. In addition, participates in the glucocorticoid metabolism by catalyzing the NADPH-dependent cortisol/corticosterone into 20beta-dihydrocortisol (20b-DHF) or 20beta-corticosterone (20b-DHB), which are weak agonists of NR3C1 and NR3C2 in adipose tissue. The protein is Carbonyl reductase [NADPH] 1 of Pongo abelii (Sumatran orangutan).